A 735-amino-acid chain; its full sequence is DNA replication licensing factor mcm5-B (735 aa).

An MCM domain is found at 332-538 (IYETVAKSIA…RDMTLAKHVM (207 aa)). Residue arginine 372 coordinates ADP. Positions 513–516 (SRFD) match the Arginine finger motif.

This sequence belongs to the MCM family. Component of the mcm2-7 complex (RLF-M). The complex forms a toroidal hexameric ring with the proposed subunit order mcm2-mcm6-mcm4-mcm7-mcm3-mcm5. The heterodimer of mmcm3/mcm5 interacts with mcm4, mmcm6, mcm7 and weakly with mcm2. Component of the CMG helicase complex, composed of the mcm2-7 complex, the GINS complex and cdc45.

The protein resides in the nucleus. It is found in the chromosome. It catalyses the reaction ATP + H2O = ADP + phosphate + H(+). Acts as a component of the MCM2-7 complex (MCM complex) which is the replicative helicase essential for 'once per cell cycle' DNA replication initiation and elongation in eukaryotic cells. Core component of CDC45-MCM-GINS (CMG) helicase, the molecular machine that unwinds template DNA during replication, and around which the replisome is built. The active ATPase sites in the MCM2-7 ring are formed through the interaction surfaces of two neighboring subunits such that a critical structure of a conserved arginine finger motif is provided in trans relative to the ATP-binding site of the Walker A box of the adjacent subunit. The six ATPase active sites, however, are likely to contribute differentially to the complex helicase activity. The chain is DNA replication licensing factor mcm5-B (mcm5-b) from Xenopus laevis (African clawed frog).